Consider the following 154-residue polypeptide: Ribonuclease H (154 aa).

The region spanning 5–146 (EQNIVYLYCD…ADELANRGID (142 aa)) is the RNase H type-1 domain. Residues aspartate 14, glutamate 52, aspartate 74, and aspartate 138 each coordinate Mg(2+).

It belongs to the RNase H family. Monomer. Mg(2+) serves as cofactor.

It localises to the cytoplasm. It carries out the reaction Endonucleolytic cleavage to 5'-phosphomonoester.. Its function is as follows. Endonuclease that specifically degrades the RNA of RNA-DNA hybrids. This is Ribonuclease H from Coxiella burnetii (strain CbuK_Q154) (Coxiella burnetii (strain Q154)).